We begin with the raw amino-acid sequence, 431 residues long: MPVLIESIGNLERRLTFSVPEDRLESHVDERLREIARTARINGFRAGKVPAKVIEQRFGEKVRAEVLDSLLRETLDSAIRAHSLRLAGAARIDHANEGRLNFVATFEVVPDFGEIDVSKFSVVRRTARVTDVDIDQMIENLRLQRRTWRVAEHGAQVGHLVALETWSQAGDERLPIEGVEAGSTILGSGVMFEQIERGLEGLSKGDEKVLDVTFPDDWRVTQLAGKAVQVHVKVIEVSEPVLLEVNEEFIKSFGVKSGKLEDFRADIRANLERELKGALVSHLRREVGEQLIAAYAHVEMPPRLVEKEARLMLAKQIEQIRLSGRDPTGIPDDAHIGFMDAACKRVLVGLLVGEIAGRNRLRLDPMRVTETLHLIASTYEEPEEVFEMYRNDPKLMEGVQSLVMEEQVIEWIADRAKKTEQVLSFQEAIQQ.

The PPIase FKBP-type domain maps to 158–243 (GHLVALETWS…VIEVSEPVLL (86 aa)).

Belongs to the FKBP-type PPIase family. Tig subfamily.

The protein resides in the cytoplasm. The enzyme catalyses [protein]-peptidylproline (omega=180) = [protein]-peptidylproline (omega=0). In terms of biological role, involved in protein export. Acts as a chaperone by maintaining the newly synthesized protein in an open conformation. Functions as a peptidyl-prolyl cis-trans isomerase. In Xylella fastidiosa (strain 9a5c), this protein is Trigger factor (tig).